A 157-amino-acid polypeptide reads, in one-letter code: Crossover junction endodeoxyribonuclease RuvC (157 aa).

Residues Asp7, Glu67, and Asp140 contribute to the active site. Mg(2+)-binding residues include Asp7, Glu67, and Asp140.

This sequence belongs to the RuvC family. Homodimer which binds Holliday junction (HJ) DNA. The HJ becomes 2-fold symmetrical on binding to RuvC with unstacked arms; it has a different conformation from HJ DNA in complex with RuvA. In the full resolvosome a probable DNA-RuvA(4)-RuvB(12)-RuvC(2) complex forms which resolves the HJ. Mg(2+) serves as cofactor.

It localises to the cytoplasm. The enzyme catalyses Endonucleolytic cleavage at a junction such as a reciprocal single-stranded crossover between two homologous DNA duplexes (Holliday junction).. Functionally, the RuvA-RuvB-RuvC complex processes Holliday junction (HJ) DNA during genetic recombination and DNA repair. Endonuclease that resolves HJ intermediates. Cleaves cruciform DNA by making single-stranded nicks across the HJ at symmetrical positions within the homologous arms, yielding a 5'-phosphate and a 3'-hydroxyl group; requires a central core of homology in the junction. The consensus cleavage sequence is 5'-(A/T)TT(C/G)-3'. Cleavage occurs on the 3'-side of the TT dinucleotide at the point of strand exchange. HJ branch migration catalyzed by RuvA-RuvB allows RuvC to scan DNA until it finds its consensus sequence, where it cleaves and resolves the cruciform DNA. This chain is Crossover junction endodeoxyribonuclease RuvC, found in Rickettsia conorii (strain ATCC VR-613 / Malish 7).